A 244-amino-acid polypeptide reads, in one-letter code: N-(5'-phosphoribosyl)anthranilate isomerase 3, chloroplastic (244 aa).

Residues 1 to 32 constitute a chloroplast transit peptide; that stretch reads MSTGISSDLHLHPRALNFSKTSKSGLSNRKVS.

It belongs to the TrpF family.

It is found in the plastid. It localises to the chloroplast. It carries out the reaction N-(5-phospho-beta-D-ribosyl)anthranilate = 1-(2-carboxyphenylamino)-1-deoxy-D-ribulose 5-phosphate. It participates in amino-acid biosynthesis; L-tryptophan biosynthesis; L-tryptophan from chorismate: step 3/5. This is N-(5'-phosphoribosyl)anthranilate isomerase 3, chloroplastic (PAI3) from Arabidopsis thaliana (Mouse-ear cress).